The following is a 143-amino-acid chain: Transcriptional regulator MraZ (143 aa).

SpoVT-AbrB domains follow at residues E5–E47 and A76–R119.

Belongs to the MraZ family. In terms of assembly, forms oligomers.

The protein localises to the cytoplasm. It localises to the nucleoid. The chain is Transcriptional regulator MraZ from Halothermothrix orenii (strain H 168 / OCM 544 / DSM 9562).